The chain runs to 379 residues: Carbamoyl phosphate synthase small chain (379 aa).

The tract at residues 1 to 189 is CPSase; it reads MSKSALLVLE…GLPEAKADSE (189 aa). The L-glutamine site is built by S47, G241, and G243. The Glutamine amidotransferase type-1 domain occupies 193–379; it reads HVVAYDFGAK…FIELIKQFRA (187 aa). C269 (nucleophile) is an active-site residue. The L-glutamine site is built by L270, Q273, N311, G313, and F314. Active-site residues include H353 and E355.

It belongs to the CarA family. In terms of assembly, composed of two chains; the small (or glutamine) chain promotes the hydrolysis of glutamine to ammonia, which is used by the large (or ammonia) chain to synthesize carbamoyl phosphate. Tetramer of heterodimers (alpha,beta)4.

It catalyses the reaction hydrogencarbonate + L-glutamine + 2 ATP + H2O = carbamoyl phosphate + L-glutamate + 2 ADP + phosphate + 2 H(+). It carries out the reaction L-glutamine + H2O = L-glutamate + NH4(+). The protein operates within amino-acid biosynthesis; L-arginine biosynthesis; carbamoyl phosphate from bicarbonate: step 1/1. It participates in pyrimidine metabolism; UMP biosynthesis via de novo pathway; (S)-dihydroorotate from bicarbonate: step 1/3. Functionally, small subunit of the glutamine-dependent carbamoyl phosphate synthetase (CPSase). CPSase catalyzes the formation of carbamoyl phosphate from the ammonia moiety of glutamine, carbonate, and phosphate donated by ATP, constituting the first step of 2 biosynthetic pathways, one leading to arginine and/or urea and the other to pyrimidine nucleotides. The small subunit (glutamine amidotransferase) binds and cleaves glutamine to supply the large subunit with the substrate ammonia. This chain is Carbamoyl phosphate synthase small chain, found in Vibrio cholerae serotype O1 (strain ATCC 39315 / El Tor Inaba N16961).